The sequence spans 639 residues: Chaperone protein HtpG (639 aa).

An a; substrate-binding region spans residues 1–348 (MAQYEFQTEV…SEDLPLNVSR (348 aa)). Positions 349-565 (EILQQNRVLA…ENDPTVQMER (217 aa)) are b. The tract at residues 566-639 (LMRATGQTHK…KRVNRLLARG (74 aa)) is c.

This sequence belongs to the heat shock protein 90 family. Homodimer.

The protein resides in the cytoplasm. Functionally, molecular chaperone. Has ATPase activity. The chain is Chaperone protein HtpG from Treponema pallidum (strain Nichols).